We begin with the raw amino-acid sequence, 443 residues long: Tryptophan synthase beta chain (443 aa).

Position 110 is an N6-(pyridoxal phosphate)lysine (Lys-110).

It belongs to the TrpB family. In terms of assembly, tetramer of two alpha and two beta chains. Pyridoxal 5'-phosphate serves as cofactor.

The enzyme catalyses (1S,2R)-1-C-(indol-3-yl)glycerol 3-phosphate + L-serine = D-glyceraldehyde 3-phosphate + L-tryptophan + H2O. Its pathway is amino-acid biosynthesis; L-tryptophan biosynthesis; L-tryptophan from chorismate: step 5/5. Its function is as follows. The beta subunit is responsible for the synthesis of L-tryptophan from indole and L-serine. This Thermococcus onnurineus (strain NA1) protein is Tryptophan synthase beta chain.